The primary structure comprises 328 residues: D-cysteine desulfhydrase (328 aa).

Lysine 51 is subject to N6-(pyridoxal phosphate)lysine.

It belongs to the ACC deaminase/D-cysteine desulfhydrase family. As to quaternary structure, homodimer. Pyridoxal 5'-phosphate serves as cofactor.

It catalyses the reaction D-cysteine + H2O = hydrogen sulfide + pyruvate + NH4(+) + H(+). Its function is as follows. Catalyzes the alpha,beta-elimination reaction of D-cysteine and of several D-cysteine derivatives. It could be a defense mechanism against D-cysteine. The sequence is that of D-cysteine desulfhydrase from Salmonella paratyphi A (strain AKU_12601).